Reading from the N-terminus, the 249-residue chain is 2,3-bisphosphoglycerate-dependent phosphoglycerate mutase (249 aa).

Substrate contacts are provided by residues 9–16 (RHGQSQWN), 22–23 (TG), Arg-61, 88–91 (ERHY), Lys-99, 115–116 (RR), and 184–185 (GN). The Tele-phosphohistidine intermediate role is filled by His-10. The Proton donor/acceptor role is filled by Glu-88.

This sequence belongs to the phosphoglycerate mutase family. BPG-dependent PGAM subfamily. Homodimer.

The catalysed reaction is (2R)-2-phosphoglycerate = (2R)-3-phosphoglycerate. It participates in carbohydrate degradation; glycolysis; pyruvate from D-glyceraldehyde 3-phosphate: step 3/5. Its function is as follows. Catalyzes the interconversion of 2-phosphoglycerate and 3-phosphoglycerate. The sequence is that of 2,3-bisphosphoglycerate-dependent phosphoglycerate mutase from Xanthomonas campestris pv. campestris (strain B100).